We begin with the raw amino-acid sequence, 100 residues long: MDLVKYLTFSMILFLLGIWGIFLNRKNILIMLMSIELMLLAVNLNFLVFSVYLDDMMGQLFALFVLTVAAAESAIGLAILVITFRIRGTIAVEFINCMKG.

3 consecutive transmembrane segments (helical) span residues 3-23, 28-48, and 62-82; these read LVKY…GIFL, ILIM…NFLV, and ALFV…ILVI.

The protein belongs to the complex I subunit 4L family. In terms of assembly, complex I is composed of about 45 different subunits.

It localises to the mitochondrion membrane. It catalyses the reaction a ubiquinone + NADH + 5 H(+)(in) = a ubiquinol + NAD(+) + 4 H(+)(out). Core subunit of the mitochondrial membrane respiratory chain NADH dehydrogenase (Complex I) that is believed to belong to the minimal assembly required for catalysis. Complex I functions in the transfer of electrons from NADH to the respiratory chain. The immediate electron acceptor for the enzyme is believed to be ubiquinone. In Marchantia polymorpha (Common liverwort), this protein is NADH-ubiquinone oxidoreductase chain 4L (ND4L).